Reading from the N-terminus, the 626-residue chain is Ankyrin repeat domain-containing protein 13B (626 aa).

Position 1 is an N-acetylmethionine (Met-1). ANK repeat units lie at residues 47 to 76 (RGRT…DVGR) and 80 to 109 (SGWT…YQRV). The segment at 442–470 (PVPSVRGSPGSETPSPGSDSSSVSSSSST) is disordered. The segment covering 448-470 (GSPGSETPSPGSDSSSVSSSSST) has biased composition (low complexity). A UIM 1 domain is found at 503-522 (EDDDLLRFAIQQSLLEAGSE). The interval 534-614 (NSKPGTHPMS…RRRVRQEEEE (81 aa)) is disordered. The span at 554-575 (PPTPQRQPMPPAPVPSPRPSPG) shows a compositional bias: pro residues. UIM domains lie at 585–604 (SYDE…QEER) and 610–626 (QEEE…LTEQ).

Interacts with EGFR (ubiquitinated); the interaction is direct and may regulate EGFR internalization.

Its subcellular location is the cell membrane. The protein resides in the late endosome. It is found in the early endosome. Ubiquitin-binding protein that specifically recognizes and binds 'Lys-63'-linked ubiquitin. Does not bind 'Lys-48'-linked ubiquitin. Positively regulates the internalization of ligand-activated EGFR by binding to the Ub moiety of ubiquitinated EGFR at the cell membrane. In Mus musculus (Mouse), this protein is Ankyrin repeat domain-containing protein 13B (Ankrd13b).